The chain runs to 83 residues: Small ribosomal subunit protein bS16 (83 aa).

This sequence belongs to the bacterial ribosomal protein bS16 family.

The polypeptide is Small ribosomal subunit protein bS16 (Borrelia duttonii (strain Ly)).